Reading from the N-terminus, the 299-residue chain is Putative zinc-binding protein ORF12 (299 aa).

This is Putative zinc-binding protein ORF12 (ORF12) from Ictaluridae (bullhead catfishes).